The chain runs to 127 residues: Ribonuclease VapC6 (127 aa).

Positions 26-120 constitute a PINc domain; it reads EPQRAEFCRS…ERHLPDIRVR (95 aa). Residue D86 participates in Mg(2+) binding.

This sequence belongs to the PINc/VapC protein family. The cofactor is Mg(2+).

In terms of biological role, toxic component of a type II toxin-antitoxin (TA) system. An RNase. The cognate antitoxin is VapB6. The protein is Ribonuclease VapC6 of Mycobacterium tuberculosis (strain CDC 1551 / Oshkosh).